The following is a 232-amino-acid chain: MKDYFKEGLEKIKVSYDENKMEKSLKYLEILLDYNSHTNLTAIREEKAIIEKHFLDSLLLQNLLKDEDKTLIDIGTGAGFPGMILAIFNEDKKFTLLDSVRKKTDFLELVKNELALNNVEVINGRAEEIIKDRREKYDVGLCRGVSNLSVILEYEIPFLKVNGRFLPQKMIGTDEIKNSSNALKILNSKILKEYEFKLPFSNEDRLVIEILKTKKTDEKYPRKIGIPLKKPL.

S-adenosyl-L-methionine is bound by residues Gly-75, Phe-80, 126–127 (AE), and Arg-143.

The protein belongs to the methyltransferase superfamily. RNA methyltransferase RsmG family.

The protein resides in the cytoplasm. In terms of biological role, specifically methylates the N7 position of a guanine in 16S rRNA. The chain is Ribosomal RNA small subunit methyltransferase G from Fusobacterium nucleatum subsp. nucleatum (strain ATCC 25586 / DSM 15643 / BCRC 10681 / CIP 101130 / JCM 8532 / KCTC 2640 / LMG 13131 / VPI 4355).